We begin with the raw amino-acid sequence, 131 residues long: Small ribosomal subunit protein uS8 (131 aa).

Belongs to the universal ribosomal protein uS8 family. In terms of assembly, part of the 30S ribosomal subunit. Contacts proteins S5 and S12.

One of the primary rRNA binding proteins, it binds directly to 16S rRNA central domain where it helps coordinate assembly of the platform of the 30S subunit. The sequence is that of Small ribosomal subunit protein uS8 from Polaromonas naphthalenivorans (strain CJ2).